A 652-amino-acid polypeptide reads, in one-letter code: Acetyl-coenzyme A synthetase (652 aa).

CoA is bound by residues 189–192 (RGGK) and threonine 311. ATP contacts are provided by residues 387–389 (GEP), 411–416 (DTWWQT), aspartate 500, and arginine 515. Serine 523 lines the CoA pocket. Residue arginine 526 coordinates ATP. 3 residues coordinate Mg(2+): valine 537, histidine 539, and valine 542. A CoA-binding site is contributed by arginine 584. Lysine 609 is modified (N6-acetyllysine).

It belongs to the ATP-dependent AMP-binding enzyme family. The cofactor is Mg(2+). In terms of processing, acetylated. Deacetylation by the SIR2-homolog deacetylase activates the enzyme.

It carries out the reaction acetate + ATP + CoA = acetyl-CoA + AMP + diphosphate. Catalyzes the conversion of acetate into acetyl-CoA (AcCoA), an essential intermediate at the junction of anabolic and catabolic pathways. AcsA undergoes a two-step reaction. In the first half reaction, AcsA combines acetate with ATP to form acetyl-adenylate (AcAMP) intermediate. In the second half reaction, it can then transfer the acetyl group from AcAMP to the sulfhydryl group of CoA, forming the product AcCoA. The sequence is that of Acetyl-coenzyme A synthetase from Rhizobium rhizogenes (Agrobacterium rhizogenes).